Here is a 309-residue protein sequence, read N- to C-terminus: Glutamyl-Q tRNA(Asp) synthetase (309 aa).

Residues 8–12 (RFSPS) and E44 contribute to the L-glutamate site. A 'HIGH' region motif is present at residues 11 to 21 (PSPTGPLHAGS). 4 residues coordinate Zn(2+): C100, C102, Y126, and C130. Positions 205 and 223 each coordinate L-glutamate. The short motif at 261–265 (KLSKQ) is the 'KMSKS' region element. ATP is bound at residue K264.

It belongs to the class-I aminoacyl-tRNA synthetase family. GluQ subfamily. It depends on Zn(2+) as a cofactor.

Catalyzes the tRNA-independent activation of glutamate in presence of ATP and the subsequent transfer of glutamate onto a tRNA(Asp). Glutamate is transferred on the 2-amino-5-(4,5-dihydroxy-2-cyclopenten-1-yl) moiety of the queuosine in the wobble position of the QUC anticodon. The protein is Glutamyl-Q tRNA(Asp) synthetase of Albidiferax ferrireducens (strain ATCC BAA-621 / DSM 15236 / T118) (Rhodoferax ferrireducens).